Reading from the N-terminus, the 111-residue chain is Putative protein p34 (111 aa).

The chain is Putative protein p34 (34) from Acyrthosiphon pisum secondary endosymbiont phage 1 (Bacteriophage APSE-1).